The sequence spans 441 residues: Baicalein 7-O-glucuronosyltransferase (441 aa).

It belongs to the UDP-glycosyltransferase family. As to quaternary structure, homodimer.

It catalyses the reaction baicalein + UDP-alpha-D-glucuronate = baicalin + UDP. Its activity is regulated as follows. Inhibited by copper, zinc and iron, p-Chloromercuri-benzoic acid (PCMBA) and 4,4'-diisothiocyanostilbene-2,2'-disulfonic acid (DIDS), but not by N-ethylmaleimide (NEM), dithioerythritol (DTE), calcium or magnesium. Functionally, involved in the production of glucuronosylated baicalein, a flavonoid that shows antiallergic, anti-HIV and antitumor activities. Can use baicalein, scutellarein and wogonin as substrates, but not chrysin, apigenin, luteolin, quercetin, formononetin and daidzein. Highly specific for UDP-glucuronate (UDP-GlcUA) and no activity with UDP-glucose or UDP-galacturonic acid. This Scutellaria baicalensis (Baical skullcap) protein is Baicalein 7-O-glucuronosyltransferase (UBGAT-I).